A 95-amino-acid chain; its full sequence is DNA-binding protein CENSYa_1764 (95 aa).

A disordered region spans residues 1–21; that stretch reads MSYTDPDDSLPEHVPGEAEMS.

Belongs to the PDCD5 family.

This chain is DNA-binding protein CENSYa_1764, found in Cenarchaeum symbiosum (strain A).